Consider the following 252-residue polypeptide: Aspartate/glutamate leucyltransferase (252 aa).

It belongs to the R-transferase family. Bpt subfamily.

It localises to the cytoplasm. The catalysed reaction is N-terminal L-glutamyl-[protein] + L-leucyl-tRNA(Leu) = N-terminal L-leucyl-L-glutamyl-[protein] + tRNA(Leu) + H(+). The enzyme catalyses N-terminal L-aspartyl-[protein] + L-leucyl-tRNA(Leu) = N-terminal L-leucyl-L-aspartyl-[protein] + tRNA(Leu) + H(+). Functions in the N-end rule pathway of protein degradation where it conjugates Leu from its aminoacyl-tRNA to the N-termini of proteins containing an N-terminal aspartate or glutamate. This chain is Aspartate/glutamate leucyltransferase, found in Agrobacterium fabrum (strain C58 / ATCC 33970) (Agrobacterium tumefaciens (strain C58)).